The chain runs to 373 residues: Heterogeneous nuclear ribonucleoprotein A3 homolog 1 (373 aa).

Residues 1–25 form a disordered region; that stretch reads MPRGGMDDHWPSSDDQGHDPKEPEQ. RRM domains are found at residues 27 to 110 and 118 to 206; these read RKLF…DSAR and KKIF…SAQR. 2 disordered regions span residues 196–218 and 319–373; these read KQEM…FMGR and DFGN…GRRF. The segment covering 207–218 has biased composition (gly residues); it reads GRGGGGSNFMGR. Over residues 319-333 the composition is skewed to low complexity; sequence DFGNYGGQQQSNYGP. The segment covering 334–373 has biased composition (gly residues); that stretch reads MKGGSFSGRSSGGSGSGPYGGGYGSGGGGGGGGSYGGRRF.

It localises to the nucleus. In Xenopus laevis (African clawed frog), this protein is Heterogeneous nuclear ribonucleoprotein A3 homolog 1.